The following is a 410-amino-acid chain: MSLCTLEINLSAIKANYRLLKNICENSVDFLHNVANKEEFAGNTSPRTAAYTLVREDASLGSTPKLPLGASYAKNLLVGAAVKANSYGLGAIEISKTLLEENCRYFFVASSNEGISLRKAIGDEVNILILNGVFEHDALELIEYNLIPVLNNLNQIKIWQKFSNLKNQLLPCYLHFNTGINRLGLNHNEIEQLINNRDLLKGLNVEYIISHLSASEDSDNPYNLEQLNKFKAYLEYFPNAKASLANSGGIFLGKDYHFNLVRPGAALYGLNPLGSNKPNPMQNPVTLKAPIIHLQNLTYGSRIGYNMTFTTKRDSLIATLPFGYADGFSRNFSNQGTVFINSRNVPIIGRISMDLVNIDVTDLPPSDIFLGQEVEIIGNNCTPDKIADIIGTIGYEILTSLGNRYKRIYT.

One can recognise an RPE1 insert domain in the interval 28–76; it reads VDFLHNVANKEEFAGNTSPRTAAYTLVREDASLGSTPKLPLGASYAKNL. K83 serves as the catalytic Proton acceptor; specific for D-alanine. K83 bears the N6-(pyridoxal phosphate)lysine mark. R182 contacts substrate. The active-site Proton acceptor; specific for L-alanine is Y305. M353 is a substrate binding site.

It belongs to the alanine racemase family. Pyridoxal 5'-phosphate is required as a cofactor.

It catalyses the reaction L-alanine = D-alanine. It functions in the pathway amino-acid biosynthesis; D-alanine biosynthesis; D-alanine from L-alanine: step 1/1. In terms of biological role, catalyzes the interconversion of L-alanine and D-alanine. May also act on other amino acids. This chain is Alanine racemase (alr), found in Rickettsia bellii (strain RML369-C).